A 315-amino-acid chain; its full sequence is Olfactory receptor 3A3 (315 aa).

Residues 1–28 (MESEAGTNRTAVAEFMLLGLVQTEEMQS) are Extracellular-facing. An N-linked (GlcNAc...) asparagine glycan is attached at Asn8. The chain crosses the membrane as a helical span at residues 29–52 (VIFVLLLFAYLVTTGGNLSILAAI). Residues 53–60 (LVEPKLHT) lie on the Cytoplasmic side of the membrane. A helical transmembrane segment spans residues 61–82 (PMYFFLGNLSVLDVGCITVTVP). At 83-103 (AMLGRLLSHKSTISYDACLSQ) the chain is on the extracellular side. Cys100 and Cys192 form a disulfide bridge. The helical transmembrane segment at 104 to 123 (LFFFHLLAGMDCFLLTAMAY) threads the bilayer. At 124-143 (DRFLAICRPLTYSTHMNQRV) the chain is on the cytoplasmic side. The helical transmembrane segment at 144–161 (QRMLVAVSWTCAFTNALT) threads the bilayer. At 162–199 (HTIALTTLNFCGPSVINHFYCDLPQLFQLSCSSTQLNE) the chain is on the extracellular side. Residues 200 to 222 (LLLFVAAAVMAVAPLVFISVSYA) form a helical membrane-spanning segment. Residues 223–239 (HVVAAVLQIHSAEGRKK) lie on the Cytoplasmic side of the membrane. A helical transmembrane segment spans residues 240-262 (AFSTCGSHLTVVGIFYGTGVFSY). Residues 263 to 275 (MRLGSVESSDKDK) lie on the Extracellular side of the membrane. Residues 276–295 (GVGVFMTVINPMLNPLIYSL) form a helical membrane-spanning segment. At 296–315 (RNTDVQGALCQLLVVKRSLT) the chain is on the cytoplasmic side.

Belongs to the G-protein coupled receptor 1 family.

The protein localises to the cell membrane. Its function is as follows. Odorant receptor. The sequence is that of Olfactory receptor 3A3 (OR3A3) from Pan troglodytes (Chimpanzee).